Here is a 135-residue protein sequence, read N- to C-terminus: Interleukin-4 (135 aa).

Residues 1–24 form the signal peptide; it reads MGLTYQLIPVLVCLLVCTSHLVHG. 3 cysteine pairs are disulfide-bonded: Cys-27/Cys-135, Cys-48/Cys-85, and Cys-70/Cys-105. Residue Asn-62 is glycosylated (N-linked (GlcNAc...) asparagine).

Belongs to the IL-4/IL-13 family.

The protein localises to the secreted. Its function is as follows. Participates in at least several B-cell activation processes as well as of other cell types. It is a costimulator of DNA-synthesis. It induces the expression of class II MHC molecules on resting B-cells. It enhances both secretion and cell surface expression of IgE and IgG1. It also regulates the expression of the low affinity Fc receptor for IgE (CD23) on both lymphocytes and monocytes. Positively regulates IL31RA expression in macrophages. Stimulates autophagy in dendritic cells by interfering with mTORC1 signaling and through the induction of RUFY4. In Bubalus bubalis (Domestic water buffalo), this protein is Interleukin-4 (IL4).